The sequence spans 192 residues: Peptidyl-tRNA hydrolase (192 aa).

Tyr-18 contributes to the tRNA binding site. His-23 serves as the catalytic Proton acceptor. TRNA contacts are provided by Phe-69, Asn-71, and Asn-117.

Belongs to the PTH family. In terms of assembly, monomer.

The protein resides in the cytoplasm. The enzyme catalyses an N-acyl-L-alpha-aminoacyl-tRNA + H2O = an N-acyl-L-amino acid + a tRNA + H(+). Functionally, hydrolyzes ribosome-free peptidyl-tRNAs (with 1 or more amino acids incorporated), which drop off the ribosome during protein synthesis, or as a result of ribosome stalling. Catalyzes the release of premature peptidyl moieties from peptidyl-tRNA molecules trapped in stalled 50S ribosomal subunits, and thus maintains levels of free tRNAs and 50S ribosomes. The chain is Peptidyl-tRNA hydrolase from Neisseria meningitidis serogroup A / serotype 4A (strain DSM 15465 / Z2491).